A 321-amino-acid polypeptide reads, in one-letter code: Aspartate carbamoyltransferase catalytic subunit (321 aa).

2 residues coordinate carbamoyl phosphate: R70 and T71. K98 provides a ligand contact to L-aspartate. Carbamoyl phosphate contacts are provided by R120, H148, and Q151. L-aspartate is bound by residues R181 and R235. Carbamoyl phosphate is bound by residues G276 and P277.

The protein belongs to the aspartate/ornithine carbamoyltransferase superfamily. ATCase family. As to quaternary structure, heterododecamer (2C3:3R2) of six catalytic PyrB chains organized as two trimers (C3), and six regulatory PyrI chains organized as three dimers (R2).

The catalysed reaction is carbamoyl phosphate + L-aspartate = N-carbamoyl-L-aspartate + phosphate + H(+). Its pathway is pyrimidine metabolism; UMP biosynthesis via de novo pathway; (S)-dihydroorotate from bicarbonate: step 2/3. Its function is as follows. Catalyzes the condensation of carbamoyl phosphate and aspartate to form carbamoyl aspartate and inorganic phosphate, the committed step in the de novo pyrimidine nucleotide biosynthesis pathway. The protein is Aspartate carbamoyltransferase catalytic subunit of Gluconacetobacter diazotrophicus (strain ATCC 49037 / DSM 5601 / CCUG 37298 / CIP 103539 / LMG 7603 / PAl5).